The following is a 64-amino-acid chain: Large ribosomal subunit protein bL33 (64 aa).

The protein belongs to the bacterial ribosomal protein bL33 family.

This Nostoc sp. (strain PCC 7120 / SAG 25.82 / UTEX 2576) protein is Large ribosomal subunit protein bL33.